We begin with the raw amino-acid sequence, 147 residues long: Urease accessory protein UreE (147 aa).

It belongs to the UreE family.

It is found in the cytoplasm. Involved in urease metallocenter assembly. Binds nickel. Probably functions as a nickel donor during metallocenter assembly. The sequence is that of Urease accessory protein UreE from Nostoc sp. (strain PCC 7120 / SAG 25.82 / UTEX 2576).